A 310-amino-acid polypeptide reads, in one-letter code: Homoserine kinase (310 aa).

91-101 (PIGSGLGSSAC) is an ATP binding site.

The protein belongs to the GHMP kinase family. Homoserine kinase subfamily.

The protein localises to the cytoplasm. It catalyses the reaction L-homoserine + ATP = O-phospho-L-homoserine + ADP + H(+). Its pathway is amino-acid biosynthesis; L-threonine biosynthesis; L-threonine from L-aspartate: step 4/5. Functionally, catalyzes the ATP-dependent phosphorylation of L-homoserine to L-homoserine phosphate. This is Homoserine kinase from Escherichia coli O6:K15:H31 (strain 536 / UPEC).